Reading from the N-terminus, the 199-residue chain is Shikimate kinase (199 aa).

Residue 32-37 (GSGKTS) participates in ATP binding. Residue T36 coordinates Mg(2+). Positions 54, 78, and 100 each coordinate substrate. R138 lines the ATP pocket. R157 lines the substrate pocket.

The protein belongs to the shikimate kinase family. Monomer. Mg(2+) serves as cofactor.

The protein localises to the cytoplasm. It catalyses the reaction shikimate + ATP = 3-phosphoshikimate + ADP + H(+). It functions in the pathway metabolic intermediate biosynthesis; chorismate biosynthesis; chorismate from D-erythrose 4-phosphate and phosphoenolpyruvate: step 5/7. In terms of biological role, catalyzes the specific phosphorylation of the 3-hydroxyl group of shikimic acid using ATP as a cosubstrate. The sequence is that of Shikimate kinase from Synechococcus sp. (strain CC9605).